A 350-amino-acid polypeptide reads, in one-letter code: Erythronate-4-phosphate dehydrogenase (350 aa).

Residues S45 and T66 each contribute to the substrate site. Residues 124 to 125 (QV), D144, 203 to 205 (ASR), and D226 each bind NAD(+). R205 is a catalytic residue. The active site involves E231. Catalysis depends on H248, which acts as the Proton donor. NAD(+) is bound at residue G251.

This sequence belongs to the D-isomer specific 2-hydroxyacid dehydrogenase family. PdxB subfamily. As to quaternary structure, homodimer.

It is found in the cytoplasm. It carries out the reaction 4-phospho-D-erythronate + NAD(+) = (R)-3-hydroxy-2-oxo-4-phosphooxybutanoate + NADH + H(+). It functions in the pathway cofactor biosynthesis; pyridoxine 5'-phosphate biosynthesis; pyridoxine 5'-phosphate from D-erythrose 4-phosphate: step 2/5. Functionally, catalyzes the oxidation of erythronate-4-phosphate to 3-hydroxy-2-oxo-4-phosphonooxybutanoate. The chain is Erythronate-4-phosphate dehydrogenase from Legionella pneumophila (strain Lens).